A 416-amino-acid chain; its full sequence is Pectin acetylesterase 10 (416 aa).

The N-terminal stretch at 1–20 (MRKLFLLGFIVAGLVLGNEA) is a signal peptide. A glycan (N-linked (GlcNAc...) asparagine) is linked at Asn-27. Catalysis depends on charge relay system residues Ser-198, Asp-294, and His-361.

Belongs to the pectinacetylesterase family.

It localises to the secreted. The protein localises to the cell wall. In terms of biological role, hydrolyzes acetyl esters in homogalacturonan regions of pectin. In type I primary cell wall, galacturonic acid residues of pectin can be acetylated at the O-2 and O-3 positions. Decreasing the degree of acetylation of pectin gels in vitro alters their physical properties. This is Pectin acetylesterase 10 from Arabidopsis thaliana (Mouse-ear cress).